A 241-amino-acid chain; its full sequence is Probable porphobilinogen deaminase (241 aa).

The protein belongs to the HMBS family.

The catalysed reaction is 4 porphobilinogen + H2O = hydroxymethylbilane + 4 NH4(+). The protein operates within porphyrin-containing compound metabolism; protoporphyrin-IX biosynthesis; coproporphyrinogen-III from 5-aminolevulinate: step 2/4. Its function is as follows. Tetrapolymerization of the monopyrrole PBG into the hydroxymethylbilane pre-uroporphyrinogen in several discrete steps. The protein is Probable porphobilinogen deaminase (hemC) of Chlamydia trachomatis serovar D (strain ATCC VR-885 / DSM 19411 / UW-3/Cx).